Consider the following 299-residue polypeptide: Oxygen-dependent coproporphyrinogen-III oxidase (299 aa).

Ser-92 lines the substrate pocket. Mn(2+) is bound by residues His-96 and His-106. The active-site Proton donor is the His-106. 108 to 110 serves as a coordination point for substrate; the sequence is NVR. Positions 145 and 175 each coordinate Mn(2+). Residues 240–275 are important for dimerization; it reads YVEFNLVWDRGTLFGLQTGGRTESILMSMPPLVRWE. Residue 258 to 260 coordinates substrate; it reads GGR.

The protein belongs to the aerobic coproporphyrinogen-III oxidase family. Homodimer. It depends on Mn(2+) as a cofactor.

Its subcellular location is the cytoplasm. The enzyme catalyses coproporphyrinogen III + O2 + 2 H(+) = protoporphyrinogen IX + 2 CO2 + 2 H2O. It functions in the pathway porphyrin-containing compound metabolism; protoporphyrin-IX biosynthesis; protoporphyrinogen-IX from coproporphyrinogen-III (O2 route): step 1/1. In terms of biological role, involved in the heme biosynthesis. Catalyzes the aerobic oxidative decarboxylation of propionate groups of rings A and B of coproporphyrinogen-III to yield the vinyl groups in protoporphyrinogen-IX. This Escherichia coli O8 (strain IAI1) protein is Oxygen-dependent coproporphyrinogen-III oxidase.